We begin with the raw amino-acid sequence, 360 residues long: DNA polymerase IV (360 aa).

In terms of domain architecture, UmuC spans V8–G191. Residues D12 and D110 each contribute to the Mg(2+) site. E111 is an active-site residue.

The protein belongs to the DNA polymerase type-Y family. In terms of assembly, monomer. It depends on Mg(2+) as a cofactor.

Its subcellular location is the cytoplasm. The enzyme catalyses DNA(n) + a 2'-deoxyribonucleoside 5'-triphosphate = DNA(n+1) + diphosphate. In terms of biological role, poorly processive, error-prone DNA polymerase involved in untargeted mutagenesis. Copies undamaged DNA at stalled replication forks, which arise in vivo from mismatched or misaligned primer ends. These misaligned primers can be extended by PolIV. Exhibits no 3'-5' exonuclease (proofreading) activity. May be involved in translesional synthesis. The sequence is that of DNA polymerase IV from Methanoculleus marisnigri (strain ATCC 35101 / DSM 1498 / JR1).